We begin with the raw amino-acid sequence, 322 residues long: NADH-quinone oxidoreductase subunit H (322 aa).

8 helical membrane-spanning segments follow: residues Ile14 to Phe34, Tyr81 to Ile101, Val114 to Gly134, Ser149 to Ala169, Leu186 to Leu206, Phe237 to Phe257, Phe265 to Ile285, and Trp302 to Ile322.

Belongs to the complex I subunit 1 family. In terms of assembly, NDH-1 is composed of 13 different subunits. Subunits NuoA, H, J, K, L, M, N constitute the membrane sector of the complex.

Its subcellular location is the cell inner membrane. It catalyses the reaction a quinone + NADH + 5 H(+)(in) = a quinol + NAD(+) + 4 H(+)(out). In terms of biological role, NDH-1 shuttles electrons from NADH, via FMN and iron-sulfur (Fe-S) centers, to quinones in the respiratory chain. The immediate electron acceptor for the enzyme in this species is believed to be ubiquinone. Couples the redox reaction to proton translocation (for every two electrons transferred, four hydrogen ions are translocated across the cytoplasmic membrane), and thus conserves the redox energy in a proton gradient. This subunit may bind ubiquinone. This Blochmanniella floridana protein is NADH-quinone oxidoreductase subunit H.